The following is a 243-amino-acid chain: Triosephosphate isomerase (243 aa).

9-11 (NWK) is a binding site for substrate. The active-site Electrophile is His96. Catalysis depends on Glu165, which acts as the Proton acceptor. Substrate-binding positions include Gly171, Ser204, and 225–226 (GG).

The protein belongs to the triosephosphate isomerase family. In terms of assembly, homodimer.

Its subcellular location is the cytoplasm. It carries out the reaction D-glyceraldehyde 3-phosphate = dihydroxyacetone phosphate. It participates in carbohydrate biosynthesis; gluconeogenesis. It functions in the pathway carbohydrate degradation; glycolysis; D-glyceraldehyde 3-phosphate from glycerone phosphate: step 1/1. Involved in the gluconeogenesis. Catalyzes stereospecifically the conversion of dihydroxyacetone phosphate (DHAP) to D-glyceraldehyde-3-phosphate (G3P). This is Triosephosphate isomerase from Prochlorococcus marinus (strain MIT 9211).